The following is a 109-amino-acid chain: Spermidine export protein MdtI (109 aa).

Transmembrane regions (helical) follow at residues 6–26, 36–56, 64–84, and 88–108; these read WIHG…NVLL, CYGI…SQAV, AYAL…WVLF, and LNPK…MIKF.

This sequence belongs to the drug/metabolite transporter (DMT) superfamily. Small multidrug resistance (SMR) (TC 2.A.7.1) family. MdtI subfamily. As to quaternary structure, forms a complex with MdtJ.

Its subcellular location is the cell inner membrane. Functionally, catalyzes the excretion of spermidine. This Salmonella choleraesuis (strain SC-B67) protein is Spermidine export protein MdtI.